A 470-amino-acid polypeptide reads, in one-letter code: Aldehyde dehydrogenase family 3 comG (470 aa).

An NAD(+)-binding site is contributed by 196 to 201; the sequence is GSVKVG. Residues glutamate 218 and cysteine 252 contribute to the active site.

The protein belongs to the aldehyde dehydrogenase family.

Its subcellular location is the cytoplasm. The catalysed reaction is an aldehyde + NADP(+) + H2O = a carboxylate + NADPH + 2 H(+). The enzyme catalyses an aldehyde + NAD(+) + H2O = a carboxylate + NADH + 2 H(+). This chain is Aldehyde dehydrogenase family 3 comG (comG), found in Dictyostelium discoideum (Social amoeba).